Here is a 189-residue protein sequence, read N- to C-terminus: Thymidine kinase (189 aa).

ATP contacts are provided by residues 9 to 16 (GTMNSGKT) and 85 to 88 (DESQ). Residue glutamate 86 is the Proton acceptor of the active site. Residues cysteine 143, cysteine 146, cysteine 180, and histidine 183 each contribute to the Zn(2+) site.

Belongs to the thymidine kinase family. Homotetramer.

Its subcellular location is the cytoplasm. It catalyses the reaction thymidine + ATP = dTMP + ADP + H(+). This Streptococcus pyogenes serotype M1 protein is Thymidine kinase.